The primary structure comprises 501 residues: Glycerol kinase (501 aa).

Thr12 is an ADP binding site. Thr12, Thr13, and Ser14 together coordinate ATP. Sn-glycerol 3-phosphate is bound at residue Thr12. Arg16 is a binding site for ADP. Residues Arg82, Glu83, Tyr134, and Asp244 each contribute to the sn-glycerol 3-phosphate site. Positions 82, 83, 134, 244, and 245 each coordinate glycerol. Residues Thr266 and Gly310 each contribute to the ADP site. Residues Thr266, Gly310, Gln314, and Gly411 each contribute to the ATP site. Gly411 and Asn415 together coordinate ADP.

It belongs to the FGGY kinase family.

The enzyme catalyses glycerol + ATP = sn-glycerol 3-phosphate + ADP + H(+). It participates in polyol metabolism; glycerol degradation via glycerol kinase pathway; sn-glycerol 3-phosphate from glycerol: step 1/1. Inhibited by fructose 1,6-bisphosphate (FBP). Key enzyme in the regulation of glycerol uptake and metabolism. Catalyzes the phosphorylation of glycerol to yield sn-glycerol 3-phosphate. This is Glycerol kinase from Methylorubrum extorquens (strain PA1) (Methylobacterium extorquens).